A 247-amino-acid chain; its full sequence is Large ribosomal subunit protein uL30 (247 aa).

The protein belongs to the universal ribosomal protein uL30 family.

The sequence is that of Large ribosomal subunit protein uL30 (RPL7L1) from Sus scrofa (Pig).